A 440-amino-acid chain; its full sequence is UDP-N-acetylmuramoylalanine--D-glutamate ligase (440 aa).

109–115 (GTNGKTT) lines the ATP pocket.

This sequence belongs to the MurCDEF family.

The protein resides in the cytoplasm. It catalyses the reaction UDP-N-acetyl-alpha-D-muramoyl-L-alanine + D-glutamate + ATP = UDP-N-acetyl-alpha-D-muramoyl-L-alanyl-D-glutamate + ADP + phosphate + H(+). The protein operates within cell wall biogenesis; peptidoglycan biosynthesis. Its function is as follows. Cell wall formation. Catalyzes the addition of glutamate to the nucleotide precursor UDP-N-acetylmuramoyl-L-alanine (UMA). This Rubrobacter xylanophilus (strain DSM 9941 / JCM 11954 / NBRC 16129 / PRD-1) protein is UDP-N-acetylmuramoylalanine--D-glutamate ligase.